The chain runs to 505 residues: ATP synthase subunit alpha (505 aa).

170–177 (GDRQTGKT) contributes to the ATP binding site.

The protein belongs to the ATPase alpha/beta chains family. In terms of assembly, F-type ATPases have 2 components, CF(1) - the catalytic core - and CF(0) - the membrane proton channel. CF(1) has five subunits: alpha(3), beta(3), gamma(1), delta(1), epsilon(1). CF(0) has four main subunits: a, b, b' and c.

Its subcellular location is the cellular thylakoid membrane. The enzyme catalyses ATP + H2O + 4 H(+)(in) = ADP + phosphate + 5 H(+)(out). Produces ATP from ADP in the presence of a proton gradient across the membrane. The alpha chain is a regulatory subunit. The chain is ATP synthase subunit alpha from Cyanothece sp. (strain PCC 7425 / ATCC 29141).